The primary structure comprises 397 residues: MNENIAEKFRADGVARPNWSAVFAVAFCVACLITVEFLPVSLLTPMAQDLGISEGIAGQSVTVTAFVAMFSSLFITQIIQATDRRYIVILFAVLLTASCLMVSFANSFTLLLLGRACLGLALGGFWAMSASLTMRLVPARTVPKALSVIFGAVSIALVIAAPLGSFLGGIIGWRNVFNAAAVMGVLCVIWVVKSLPSLPGEPSHQKQNMFSLLQRPGVMAGMIAIFMSFAGQFAFFTYIRPVYMNLAGFDVDGLTLVLLSFGIASFVGTSFSSYVLKRSVKLALAGAPLLLALSALTLIVWGSDKTVAAVIAIIWGLAFALVPVGWSTWITRSLADQAEKAGSIQVAVIQLANTCGAAVGGYALDNFGLLSPLALSGCLMLLTALVVAAKVRITPMS.

Residues 1-21 (MNENIAEKFRADGVARPNWSA) lie on the Cytoplasmic side of the membrane. A helical transmembrane segment spans residues 22 to 42 (VFAVAFCVACLITVEFLPVSL). The Periplasmic segment spans residues 43-54 (LTPMAQDLGISE). The chain crosses the membrane as a helical span at residues 55-75 (GIAGQSVTVTAFVAMFSSLFI). The Cytoplasmic portion of the chain corresponds to 76 to 85 (TQIIQATDRR). Residues 86-106 (YIVILFAVLLTASCLMVSFAN) traverse the membrane as a helical segment. Position 107 (Ser107) is a topological domain, periplasmic. A helical transmembrane segment spans residues 108-128 (FTLLLLGRACLGLALGGFWAM). Topologically, residues 129–147 (SASLTMRLVPARTVPKALS) are cytoplasmic. The chain crosses the membrane as a helical span at residues 148–168 (VIFGAVSIALVIAAPLGSFLG). At 169–175 (GIIGWRN) the chain is on the periplasmic side. A helical membrane pass occupies residues 176–196 (VFNAAAVMGVLCVIWVVKSLP). Residues 197 to 215 (SLPGEPSHQKQNMFSLLQR) lie on the Cytoplasmic side of the membrane. The helical transmembrane segment at 216-236 (PGVMAGMIAIFMSFAGQFAFF) threads the bilayer. Topologically, residues 237–255 (TYIRPVYMNLAGFDVDGLT) are periplasmic. The helical transmembrane segment at 256 to 276 (LVLLSFGIASFVGTSFSSYVL) threads the bilayer. Over 277 to 281 (KRSVK) the chain is Cytoplasmic. The chain crosses the membrane as a helical span at residues 282-302 (LALAGAPLLLALSALTLIVWG). The Periplasmic segment spans residues 303-305 (SDK). Residues 306–326 (TVAAVIAIIWGLAFALVPVGW) form a helical membrane-spanning segment. Residues 327–343 (STWITRSLADQAEKAGS) are Cytoplasmic-facing. Residues 344–364 (IQVAVIQLANTCGAAVGGYAL) form a helical membrane-spanning segment. Residues 365-366 (DN) lie on the Periplasmic side of the membrane. A helical membrane pass occupies residues 367 to 387 (FGLLSPLALSGCLMLLTALVV). The Cytoplasmic segment spans residues 388–397 (AAKVRITPMS).

The protein belongs to the major facilitator superfamily. DHA1 family. NepI (TC 2.A.1.2.26) subfamily.

It localises to the cell inner membrane. The enzyme catalyses inosine(in) + H(+)(out) = inosine(out) + H(+)(in). It catalyses the reaction guanosine(in) + H(+)(out) = guanosine(out) + H(+)(in). Functionally, involved in the efflux of purine ribonucleosides, such as inosine and guanosine. In Salmonella enteritidis PT4 (strain P125109), this protein is Purine ribonucleoside efflux pump NepI.